Reading from the N-terminus, the 84-residue chain is LYR motif-containing protein 4B (84 aa).

Belongs to the complex I LYR family.

This chain is LYR motif-containing protein 4B (lyrm4b), found in Salmo salar (Atlantic salmon).